The following is a 453-amino-acid chain: GTPase Der (453 aa).

2 EngA-type G domains span residues 4–169 (PIVA…PPAD) and 178–353 (IGVA…EQHR). Residues 10–17 (GRPNVGKS), 57–61 (DTGGL), 120–123 (NKCE), 184–191 (GRPNVGKS), 231–235 (DTAGI), and 296–299 (NKWD) contribute to the GTP site. One can recognise a KH-like domain in the interval 354–439 (RRVGTSVINE…PIRLFWRGKK (86 aa)).

It belongs to the TRAFAC class TrmE-Era-EngA-EngB-Septin-like GTPase superfamily. EngA (Der) GTPase family. Associates with the 50S ribosomal subunit.

In terms of biological role, GTPase that plays an essential role in the late steps of ribosome biogenesis. The polypeptide is GTPase Der (Synechococcus sp. (strain ATCC 27144 / PCC 6301 / SAUG 1402/1) (Anacystis nidulans)).